We begin with the raw amino-acid sequence, 388 residues long: Queuine tRNA-ribosyltransferase (388 aa).

D90 (proton acceptor) is an active-site residue. Residues 90–94, D144, Q205, and G232 contribute to the substrate site; that span reads DSGGF. The segment at 263–269 is RNA binding; the sequence is GVGTPED. The Nucleophile role is filled by D282. Residues 287 to 291 form an RNA binding; important for wobble base 34 recognition region; sequence TRNAR. Zn(2+)-binding residues include C320, C322, C325, and H351.

This sequence belongs to the queuine tRNA-ribosyltransferase family. In terms of assembly, homodimer. Within each dimer, one monomer is responsible for RNA recognition and catalysis, while the other monomer binds to the replacement base PreQ1. It depends on Zn(2+) as a cofactor.

The enzyme catalyses 7-aminomethyl-7-carbaguanine + guanosine(34) in tRNA = 7-aminomethyl-7-carbaguanosine(34) in tRNA + guanine. It functions in the pathway tRNA modification; tRNA-queuosine biosynthesis. Its function is as follows. Catalyzes the base-exchange of a guanine (G) residue with the queuine precursor 7-aminomethyl-7-deazaguanine (PreQ1) at position 34 (anticodon wobble position) in tRNAs with GU(N) anticodons (tRNA-Asp, -Asn, -His and -Tyr). Catalysis occurs through a double-displacement mechanism. The nucleophile active site attacks the C1' of nucleotide 34 to detach the guanine base from the RNA, forming a covalent enzyme-RNA intermediate. The proton acceptor active site deprotonates the incoming PreQ1, allowing a nucleophilic attack on the C1' of the ribose to form the product. After dissociation, two additional enzymatic reactions on the tRNA convert PreQ1 to queuine (Q), resulting in the hypermodified nucleoside queuosine (7-(((4,5-cis-dihydroxy-2-cyclopenten-1-yl)amino)methyl)-7-deazaguanosine). This Campylobacter curvus (strain 525.92) protein is Queuine tRNA-ribosyltransferase.